The following is an 87-amino-acid chain: Protein U62 (87 aa).

Belongs to the herpesviridae UL91 family.

This chain is Protein U62 (U62), found in Human herpesvirus 6B (strain Z29) (HHV-6 variant B).